Reading from the N-terminus, the 103-residue chain is Histone H4.2 (103 aa).

Residues methionine 1 to glycine 14 are compositionally biased toward gly residues. A disordered region spans residues methionine 1–arginine 20. Position 6 is an N6-acetyl-N6-methyllysine; alternate (lysine 6). 3 positions are modified to N6-methyllysine; alternate: lysine 6, lysine 9, and lysine 13. Lysine 13 carries the post-translational modification N6-acetyl-N6-methyllysine; alternate. Residues lysine 17–lysine 21 mediate DNA binding. Lysine 92 bears the N6-glutaryllysine mark.

This sequence belongs to the histone H4 family. As to quaternary structure, the nucleosome is a histone octamer containing two molecules each of H2A, H2B, H3 and H4 assembled in one H3-H4 heterotetramer and two H2A-H2B heterodimers. The octamer wraps approximately 147 bp of DNA. In terms of processing, glutarylation at Lys-92 (H4K91glu) destabilizes nucleosomes by promoting dissociation of the H2A-H2B dimers from nucleosomes.

Its subcellular location is the nucleus. It is found in the chromosome. Its function is as follows. Core component of nucleosome. Nucleosomes wrap and compact DNA into chromatin, limiting DNA accessibility to the cellular machineries which require DNA as a template. Histones thereby play a central role in transcription regulation, DNA repair, DNA replication and chromosomal stability. DNA accessibility is regulated via a complex set of post-translational modifications of histones, also called histone code, and nucleosome remodeling. The protein is Histone H4.2 (H4.2) of Talaromyces funiculosus (Fruitlet core rot fungus).